The sequence spans 173 residues: Small ribosomal subunit protein uS5 (173 aa).

An S5 DRBM domain is found at 17-80 (WQERVIQIRR…SDAKKHVVDV (64 aa)).

This sequence belongs to the universal ribosomal protein uS5 family. In terms of assembly, part of the 30S ribosomal subunit. Contacts proteins S4 and S8.

Its function is as follows. With S4 and S12 plays an important role in translational accuracy. Functionally, located at the back of the 30S subunit body where it stabilizes the conformation of the head with respect to the body. This Picosynechococcus sp. (strain ATCC 27264 / PCC 7002 / PR-6) (Agmenellum quadruplicatum) protein is Small ribosomal subunit protein uS5.